A 274-amino-acid chain; its full sequence is Putative HTH-type transcriptional regulator RmpR (274 aa).

In terms of domain architecture, HTH gntR-type spans Ile18–Gln88. Residues Glu46–Ser65 constitute a DNA-binding region (H-T-H motif). Polar residues predominate over residues Ser250–Ala265. The interval Ser250–Gln274 is disordered.

Functionally, may regulate the transcription of the rmpAB operon. This is Putative HTH-type transcriptional regulator RmpR (rmpR) from Mycobacterium gastri.